Here is a 150-residue protein sequence, read N- to C-terminus: Thyroid hormone-inducible hepatic protein (150 aa).

The interval 83–104 (KVAGNETSEAENDAAETEEAEE) is disordered. The residue at position 90 (Ser-90) is a Phosphoserine. Residues 90-104 (SEAENDAAETEEAEE) show a composition bias toward acidic residues.

It belongs to the SPOT14 family. As to quaternary structure, homodimer. Heterodimer with MID1IP1. Interacts with THRB and PLAGL1. Mainly expressed in tissues that synthesize triglycerides.

It localises to the nucleus. The protein resides in the cytoplasm. In terms of biological role, plays a role in the regulation of lipogenesis, especially in lactating mammary gland. Important for the biosynthesis of triglycerides with medium-length fatty acid chains. May modulate lipogenesis by interacting with MID1IP1 and preventing its interaction with ACACA. May function as transcriptional coactivator. May modulate the transcription factor activity of THRB. This Mus musculus (Mouse) protein is Thyroid hormone-inducible hepatic protein (Thrsp).